Here is a 204-residue protein sequence, read N- to C-terminus: Protease (204 aa).

Active-site residues include His54, Asp71, and Cys122.

The protein belongs to the peptidase C5 family. In terms of assembly, interacts with protease cofactor pVI-C; this interaction is necessary for protease activation.

The protein resides in the virion. The protein localises to the host nucleus. It catalyses the reaction Cleaves proteins of the adenovirus and its host cell at two consensus sites: -Yaa-Xaa-Gly-Gly-|-Xaa- and -Yaa-Xaa-Gly-Xaa-|-Gly- (in which Yaa is Met, Ile or Leu, and Xaa is any amino acid).. Its activity is regulated as follows. Requires DNA and protease cofactor for maximal activation. Inside nascent virions, becomes partially activated by binding to the viral DNA, allowing it to cleave the cofactor that binds to the protease and fully activates it. Actin, like the viral protease cofactor, seems to act as a cofactor in the cleavage of cytokeratin 18 and of actin itself. In terms of biological role, cleaves viral precursor proteins (pTP, pIIIa, pVI, pVII, pVIII, and pX) inside newly assembled particles giving rise to mature virions. Protease complexed to its cofactor slides along the viral DNA to specifically locate and cleave the viral precursors. Mature virions have a weakened organization compared to the unmature virions, thereby facilitating subsequent uncoating. Without maturation, the particle lacks infectivity and is unable to uncoat. Late in adenovirus infection, in the cytoplasm, may participate in the cytoskeleton destruction. Cleaves host cell cytoskeletal keratins K7 and K18. This is Protease from Bos taurus (Bovine).